Reading from the N-terminus, the 185-residue chain is uncharacterized protein (185 aa).

A run of 2 helical transmembrane segments spans residues 1-19 (MLNI…TSSA) and 105-125 (AGFI…TMDV).

The protein resides in the membrane. This is an uncharacterized protein from Caenorhabditis elegans.